Here is a 216-residue protein sequence, read N- to C-terminus: Probable GTP-binding protein EngB (216 aa).

Residues 43 to 216 (DRIEVCFAGR…TLRSIIAHLD (174 aa)) enclose the EngB-type G domain. GTP-binding positions include 51–58 (GRSNVGKS), 78–82 (GRTQE), 96–99 (DLPG), 163–166 (TKAD), and 197–199 (TSS). Residues Ser-58 and Thr-80 each contribute to the Mg(2+) site.

It belongs to the TRAFAC class TrmE-Era-EngA-EngB-Septin-like GTPase superfamily. EngB GTPase family. Mg(2+) is required as a cofactor.

Functionally, necessary for normal cell division and for the maintenance of normal septation. The sequence is that of Probable GTP-binding protein EngB from Ruegeria sp. (strain TM1040) (Silicibacter sp.).